A 545-amino-acid polypeptide reads, in one-letter code: Thermosome subunit alpha (545 aa).

The tract at residues K522–Y545 is disordered. Positions G529–Y545 are enriched in gly residues.

Belongs to the TCP-1 chaperonin family. As to quaternary structure, forms a Heterooligomeric complex of two stacked eight-membered rings. In terms of processing, the N-terminus is blocked.

Molecular chaperone; binds unfolded polypeptides in vitro, and has a weak ATPase activity. This is Thermosome subunit alpha (thsA) from Thermoplasma acidophilum (strain ATCC 25905 / DSM 1728 / JCM 9062 / NBRC 15155 / AMRC-C165).